The following is a 133-amino-acid chain: Large ribosomal subunit protein uL22 (133 aa).

It belongs to the universal ribosomal protein uL22 family. As to quaternary structure, part of the 50S ribosomal subunit.

Functionally, this protein binds specifically to 23S rRNA; its binding is stimulated by other ribosomal proteins, e.g. L4, L17, and L20. It is important during the early stages of 50S assembly. It makes multiple contacts with different domains of the 23S rRNA in the assembled 50S subunit and ribosome. In terms of biological role, the globular domain of the protein is located near the polypeptide exit tunnel on the outside of the subunit, while an extended beta-hairpin is found that lines the wall of the exit tunnel in the center of the 70S ribosome. The chain is Large ribosomal subunit protein uL22 from Nocardia farcinica (strain IFM 10152).